The sequence spans 146 residues: Anti-sigma F factor (146 aa).

The protein belongs to the anti-sigma-factor family.

It catalyses the reaction L-seryl-[protein] + ATP = O-phospho-L-seryl-[protein] + ADP + H(+). It carries out the reaction L-threonyl-[protein] + ATP = O-phospho-L-threonyl-[protein] + ADP + H(+). Its function is as follows. Binds to sigma F and blocks its ability to form an RNA polymerase holoenzyme (E-sigma F). Phosphorylates SpoIIAA on a serine residue. This phosphorylation may enable SpoIIAA to act as an anti-anti-sigma factor that counteracts SpoIIAB and thus releases sigma F from inhibition. This is Anti-sigma F factor from Bacillus licheniformis.